Reading from the N-terminus, the 122-residue chain is Small ribosomal subunit protein uS13 (122 aa).

The tract at residues 92-122 is disordered; the sequence is HRNGLPVRGQRTHTNARTRKGKAKPIAGKKK. Residues 101 to 122 show a composition bias toward basic residues; the sequence is QRTHTNARTRKGKAKPIAGKKK.

The protein belongs to the universal ribosomal protein uS13 family. In terms of assembly, part of the 30S ribosomal subunit. Forms a loose heterodimer with protein S19. Forms two bridges to the 50S subunit in the 70S ribosome.

Functionally, located at the top of the head of the 30S subunit, it contacts several helices of the 16S rRNA. In the 70S ribosome it contacts the 23S rRNA (bridge B1a) and protein L5 of the 50S subunit (bridge B1b), connecting the 2 subunits; these bridges are implicated in subunit movement. Contacts the tRNAs in the A and P-sites. In Erythrobacter litoralis (strain HTCC2594), this protein is Small ribosomal subunit protein uS13.